A 130-amino-acid chain; its full sequence is Glycine cleavage system H protein (130 aa).

The region spanning 24–106 is the Lipoyl-binding domain; sequence TFTVGITDHA…YGDGWLYRIT (83 aa). K65 carries the N6-lipoyllysine modification.

This sequence belongs to the GcvH family. The glycine cleavage system is composed of four proteins: P, T, L and H. The cofactor is (R)-lipoate.

In terms of biological role, the glycine cleavage system catalyzes the degradation of glycine. The H protein shuttles the methylamine group of glycine from the P protein to the T protein. This chain is Glycine cleavage system H protein, found in Coxiella burnetii (strain CbuK_Q154) (Coxiella burnetii (strain Q154)).